Here is a 131-residue protein sequence, read N- to C-terminus: Small ribosomal subunit protein uS12 (131 aa).

Asp89 carries the 3-methylthioaspartic acid modification. Residues 106–131 (GVDGRKQGRSKYGAKKAKVAKTASAK) form a disordered region. The span at 112-124 (QGRSKYGAKKAKV) shows a compositional bias: basic residues.

It belongs to the universal ribosomal protein uS12 family. As to quaternary structure, part of the 30S ribosomal subunit. Contacts proteins S8 and S17. May interact with IF1 in the 30S initiation complex.

In terms of biological role, with S4 and S5 plays an important role in translational accuracy. Its function is as follows. Interacts with and stabilizes bases of the 16S rRNA that are involved in tRNA selection in the A site and with the mRNA backbone. Located at the interface of the 30S and 50S subunits, it traverses the body of the 30S subunit contacting proteins on the other side and probably holding the rRNA structure together. The combined cluster of proteins S8, S12 and S17 appears to hold together the shoulder and platform of the 30S subunit. This Endomicrobium trichonymphae protein is Small ribosomal subunit protein uS12.